The sequence spans 507 residues: MEEPAAPSEAHEAAGAQAGAEAAREGVSGPDLPVCEPSGESAAPDSALPHAARGWAPFPVAPVPAHLRRGGLRPAPASGGGAWPSPLPSRSSGIWTKQIICRYYIHGQCKEGENCRYSHDLSGRKMATEGGVSPPGASAGGGPSTAAHIEPPTQEVAEAPPAASSLSLPVIGSAAERGFFEAERDNADRGAAGGAGVESWADAIEFVPGQPYRGRWVASAPEAPLQSSETERKQMAVGSGLRFCYYASRGVCFRGESCMYLHGDICDMCGLQTLHPMDAAQREEHMRACIEAHEKDMELSFAVQRGMDKVCGICMEVVYEKANPNDRRFGILSNCNHSFCIRCIRRWRSARQFENRIVKSCPQCRVTSELVIPSEFWVEEEEEKQKLIQQYKEAMSNKACRYFAEGRGNCPFGDTCFYKHEYPEGWGDEPPGPGGGSFSAYWHQLVEPVRMGEGNMLYKSIKKELVVLRLASLLFKRFLSLRDELPFSEDQWDLLHYELEEYFNLIL.

The span at 1–21 (MEEPAAPSEAHEAAGAQAGAE) shows a compositional bias: low complexity. Disordered regions lie at residues 1 to 48 (MEEP…DSAL) and 69 to 89 (RGGLRPAPASGGGAWPSPLPS). The C3H1-type 1 zinc finger occupies 95–122 (WTKQIICRYYIHGQCKEGENCRYSHDLS). Residues 126–149 (MATEGGVSPPGASAGGGPSTAAHI) are disordered. A C3H1-type 2 zinc finger spans residues 238 to 265 (GSGLRFCYYASRGVCFRGESCMYLHGDI). Residues 266-293 (CDMCGLQTLHPMDAAQREEHMRACIEAH) form a makorin-type Cys-His region. The segment at 311–365 (CGICMEVVYEKANPNDRRFGILSNCNHSFCIRCIRRWRSARQFENRIVKSCPQCR) adopts an RING-type zinc-finger fold. The segment at 394–423 (AMSNKACRYFAEGRGNCPFGDTCFYKHEYP) adopts a C3H1-type 3 zinc-finger fold.

As to expression, ubiquitous.

Its subcellular location is the nucleus. It catalyses the reaction S-ubiquitinyl-[E2 ubiquitin-conjugating enzyme]-L-cysteine + [acceptor protein]-L-lysine = [E2 ubiquitin-conjugating enzyme]-L-cysteine + N(6)-ubiquitinyl-[acceptor protein]-L-lysine.. Its pathway is protein modification; protein ubiquitination. In terms of biological role, E3 ubiquitin ligase catalyzing the covalent attachment of ubiquitin moieties onto substrate proteins. Acts as a key developmental timer that helps ensure puberty begins at the appropriate age, by inhibiting premature activation of the reproductive hormone cascade. Epigenetically regulates GNRH1 transcription by disrupting the binding of methyl-DNA binding protein 3/MBD3 to the promoter of GNRH1. Mechanistically, mediates the non-proteolytic ubiquitination of MBD3 at multiple sites with 'Lys27' ubiquitin linkages and thereby regulates the methylation status of the genome, including GNRH1 promoter. Modulates the stability and translation of GNRH1 mRNA by mediating the non-proteolytic ubiquitination of PABP family members PABPC1, PABPC3 and PABPC4 at multiple sites. Also participates in the maintenance of genomic and epigenomic stability by regulating the abundance of APEX2 via 'Lys-48'-linked ubiquitination. The sequence is that of E3 ubiquitin-protein ligase makorin-3 (MKRN3) from Homo sapiens (Human).